The following is a 1235-amino-acid chain: JNK-interacting protein 3 (1235 aa).

The disordered stretch occupies residues 1–22 (MMDNDDALLNNGGPQSGAETVY). Positions 25–113 (EDNNMVMSEK…VTQYEREKSA (89 aa)) constitute an RH1 domain. Residues 84–184 (RINQEQDVEL…NKLHERYTEL (101 aa)) adopt a coiled-coil conformation. The interval 278–325 (GAATDSLQQQHQATSPQSPPDTSPVVPNVPPANVGRSTTKKEQRSDNN) is disordered. Residues 282–293 (DSLQQQHQATSP) show a composition bias toward polar residues. Residues 294-307 (QSPPDTSPVVPNVP) are compositionally biased toward pro residues. Residues 366-493 (GKEVENLIME…AVRLTEILRA (128 aa)) are a coiled coil. In terms of domain architecture, RH2 spans 456–526 (RKRFTRVEMA…TPSNRPTERI (71 aa)). 3 disordered regions span residues 520–572 (NRPT…MHPA), 813–852 (KPKS…PVNA), and 869–897 (PGAP…STGS). Residues 529-543 (GLGGGPMFRNTGGGS) are compositionally biased toward gly residues. 2 stretches are compositionally biased toward low complexity: residues 544-555 (PAHSHGSPSRGS) and 821-830 (NSNSKPQQQQ). Residues 874 to 897 (RLSSGNSGSDGNQANNNNSSSTGS) are compositionally biased toward polar residues.

The protein belongs to the JIP scaffold family. Forms homo- and heterooligomeric complexes. Binds the TPR motif-containing C-terminal of kinesin light chain, Klc. Pre-assembled syd scaffolding complexes are then transported as a cargo of kinesin, to the required subcellular location.

It is found in the cytoplasm. Its function is as follows. The JNK-interacting protein (JIP) group of scaffold proteins selectively mediates JNK-signaling by aggregating specific components of the MAPK cascade to form a functional JNK signaling module. May function as a regulator of vesicle transport, through interactions with the JNK-signaling components and motor proteins. Syd is required for efficient kinesin-I mediated axonal transport. This chain is JNK-interacting protein 3, found in Drosophila pseudoobscura pseudoobscura (Fruit fly).